We begin with the raw amino-acid sequence, 166 residues long: Interferon gamma (166 aa).

Positions M1–C23 are cleaved as a signal peptide. Q24 carries the post-translational modification Pyrrolidone carboxylic acid. N39 and N106 each carry an N-linked (GlcNAc...) asparagine glycan.

The protein belongs to the type II (or gamma) interferon family. In terms of assembly, homodimer. Interacts with IFNGR1 (via extracellular domain); this interaction promotes IFNGR1 dimerization. Released primarily from activated T lymphocytes.

It localises to the secreted. Its function is as follows. Type II interferon produced by immune cells such as T-cells and NK cells that plays crucial roles in antimicrobial, antiviral, and antitumor responses by activating effector immune cells and enhancing antigen presentation. Primarily signals through the JAK-STAT pathway after interaction with its receptor IFNGR1 to affect gene regulation. Upon IFNG binding, IFNGR1 intracellular domain opens out to allow association of downstream signaling components JAK2, JAK1 and STAT1, leading to STAT1 activation, nuclear translocation and transcription of IFNG-regulated genes. Many of the induced genes are transcription factors such as IRF1 that are able to further drive regulation of a next wave of transcription. Plays a role in class I antigen presentation pathway by inducing a replacement of catalytic proteasome subunits with immunoproteasome subunits. In turn, increases the quantity, quality, and repertoire of peptides for class I MHC loading. Increases the efficiency of peptide generation also by inducing the expression of activator PA28 that associates with the proteasome and alters its proteolytic cleavage preference. Up-regulates as well MHC II complexes on the cell surface by promoting expression of several key molecules such as cathepsins B/CTSB, H/CTSH, and L/CTSL. Participates in the regulation of hematopoietic stem cells during development and under homeostatic conditions by affecting their development, quiescence, and differentiation. The polypeptide is Interferon gamma (IFNG) (Ailuropoda melanoleuca (Giant panda)).